The primary structure comprises 1218 residues: Coatomer subunit alpha-1 (1218 aa).

9 WD repeats span residues 7-48 (TKSN…DRFD), 49-88 (EHDGPVRGVHFHATQPLFVSGGDDYKIKVWNYKTHRCLFT), 91-132 (GHLD…AVLT), 133-172 (GHNHYVMCASFHPKEDLVVSASLDQTVRVWDIGALRKKTV), 202-241 (GHDRGVNWASFHPTLPLIVSGADDRQVKLWRMNDTKAWEV), 246-285 (GHMNNVSCVMFHAKQDIIVSNSEDKSIRIWDATKRTGIQT), 288-326 (REHDRFWILSAHPEMNLLAAGHDSGMIVFKLERERPAFS), 363-404 (SLNQ…AGRA), and 450-489 (PLPIATDAIYYAGTGNLLCKAEDRVTIFDLQQRLILGELQ). Residues 857 to 882 (NGGDGFDAEEGEANEEDGEEGGWDLE) form a disordered region. The segment covering 862 to 882 (FDAEEGEANEEDGEEGGWDLE) has biased composition (acidic residues).

As to quaternary structure, oligomeric complex that consists of at least the alpha, beta, beta', gamma, delta, epsilon and zeta subunits.

It is found in the cytoplasm. It localises to the golgi apparatus membrane. Its subcellular location is the cytoplasmic vesicle. The protein localises to the COPI-coated vesicle membrane. Functionally, the coatomer is a cytosolic protein complex that binds to dilysine motifs and reversibly associates with Golgi non-clathrin-coated vesicles, which further mediate biosynthetic protein transport from the ER, via the Golgi up to the trans Golgi network. Coatomer complex is required for budding from Golgi membranes, and is essential for the retrograde Golgi-to-ER transport of dilysine-tagged proteins. This is Coatomer subunit alpha-1 from Oryza sativa subsp. japonica (Rice).